A 474-amino-acid polypeptide reads, in one-letter code: tRNA-2-methylthio-N(6)-dimethylallyladenosine synthase (474 aa).

An MTTase N-terminal domain is found at K3–E120. [4Fe-4S] cluster-binding residues include C12, C49, C83, C157, C161, and C164. The 233-residue stretch at R143–E375 folds into the Radical SAM core domain. One can recognise a TRAM domain in the interval R378–R441.

It belongs to the methylthiotransferase family. MiaB subfamily. In terms of assembly, monomer. Requires [4Fe-4S] cluster as cofactor.

It is found in the cytoplasm. The catalysed reaction is N(6)-dimethylallyladenosine(37) in tRNA + (sulfur carrier)-SH + AH2 + 2 S-adenosyl-L-methionine = 2-methylsulfanyl-N(6)-dimethylallyladenosine(37) in tRNA + (sulfur carrier)-H + 5'-deoxyadenosine + L-methionine + A + S-adenosyl-L-homocysteine + 2 H(+). Its function is as follows. Catalyzes the methylthiolation of N6-(dimethylallyl)adenosine (i(6)A), leading to the formation of 2-methylthio-N6-(dimethylallyl)adenosine (ms(2)i(6)A) at position 37 in tRNAs that read codons beginning with uridine. This is tRNA-2-methylthio-N(6)-dimethylallyladenosine synthase from Yersinia pseudotuberculosis serotype O:3 (strain YPIII).